A 176-amino-acid chain; its full sequence is Peroxiredoxin AHP1 (176 aa).

Ser2 is subject to N-acetylserine. The Thioredoxin domain occupies 9 to 176; that stretch reads FPAGDYKFQY…SSVESVLAHL (168 aa). Ser28 is subject to Phosphoserine. A Glycyl lysine isopeptide (Lys-Gly) (interchain with G-Cter in URM1) cross-link involves residue Lys32. Residue Lys48 forms a Glycyl lysine isopeptide (Lys-Gly) (interchain with G-Cter in ubiquitin); alternate linkage. Lys48 participates in a covalent cross-link: Glycyl lysine isopeptide (Lys-Gly) (interchain with G-Cter in URM1); alternate. Ser59 carries the phosphoserine modification. Catalysis depends on Cys62, which acts as the Cysteine sulfenic acid (-SOH) intermediate. At Cys62 the chain carries Cysteine persulfide. Lys79 is covalently cross-linked (Glycyl lysine isopeptide (Lys-Gly) (interchain with G-Cter in URM1)). A Glycyl lysine isopeptide (Lys-Gly) (interchain with G-Cter in ubiquitin); alternate cross-link involves residue Lys81. A Glycyl lysine isopeptide (Lys-Gly) (interchain with G-Cter in URM1); alternate cross-link involves residue Lys81. Lys107 is covalently cross-linked (Glycyl lysine isopeptide (Lys-Gly) (interchain with G-Cter in URM1)). Residue Lys113 forms a Glycyl lysine isopeptide (Lys-Gly) (interchain with G-Cter in ubiquitin) linkage. Ser116 bears the Phosphoserine mark. Residue Cys120 is modified to Cysteine persulfide. Residue Lys124 forms a Glycyl lysine isopeptide (Lys-Gly) (interchain with G-Cter in URM1) linkage. Residue Lys156 forms a Glycyl lysine isopeptide (Lys-Gly) (interchain with G-Cter in URM1); alternate linkage. Lys156 is covalently cross-linked (Glycyl lysine isopeptide (Lys-Gly) (interchain with G-Cter in SUMO); alternate).

Belongs to the peroxiredoxin family. Prx5 subfamily. Homodimer; disulfide-linked, upon oxidation. Conjugated to URM1, a ubiquitin-like protein, in response to oxidative stresses. The attachment of URM1 to lysine residues exclusively depends on the presence of a peroxidatic cysteine in the target protein, with low specificity for the particular residue, motif, or structural context at which urmylation can occur. The URM1-conjugation reaction is mechanistically and directly coupled to the process of cysteine persulfidation, transfering the sulfur atom of the URM1 thiocarboxyl group to redox-active cysteine residues in the target protein if it is exposed to oxidative conditions. Post-translationally, persulfidated on specific redox-active cysteine residues. Persulfidation (also called protein S-sulfhydration) may provide a molecular mechanism that enables cells to protect vulnerable cysteine residues from reactive oxygen species (ROS) under stress conditions.

It is found in the cytoplasm. It carries out the reaction a hydroperoxide + [thioredoxin]-dithiol = an alcohol + [thioredoxin]-disulfide + H2O. In terms of biological role, thiol-specific peroxidase that catalyzes the reduction of hydrogen peroxide and organic hydroperoxides to water and alcohols, respectively. Plays a role in cell protection against oxidative stress by detoxifying peroxides and as sensor of hydrogen peroxide-mediated signaling events. Preferentially eliminates organic peroxides rather than hydrogen peroxide. Relays alkyl hydroperoxides as a signal to the transcription factor CAD1/YAP2 by inducing the formation of intramolecular disulfide bonds in CAD1, which causes its nuclear accumulation and activation. Involved in cellular Mn(2+) homeostasis. The protein is Peroxiredoxin AHP1 of Saccharomyces cerevisiae (strain ATCC 204508 / S288c) (Baker's yeast).